We begin with the raw amino-acid sequence, 409 residues long: FAD-dependent monooxygenase phnB (409 aa).

FAD is bound by residues E35, A50, R110, and D311.

Belongs to the paxM FAD-dependent monooxygenase family. It depends on FAD as a cofactor.

It catalyses the reaction 3,6,7,9-tetrahydroxy-3-methyl-2,3-dihydro-1H-naphtho[2,1-b]pyran-1-one + NADPH + O2 + H(+) = 2,3,4,7,9-pentahydroxy-6-methyl-1H-phenalen-1-one + NADP(+) + 2 H2O. It participates in secondary metabolite biosynthesis. Functionally, FAD-dependent monooxygenase; part of the gene cluster that mediates the biosynthesis of phenalenones such as herqueinone, compounds that have been reported to treat tumors, bacterial infections and/or mycoses, and rheumatic diseases. The non-reducing polyketide synthase phnA synthesizes the heptaketide backbone and cyclizes it into the angular, hemiketal-containing naphtho-gamma-pyrone prephenalenone. The product template (PT) domain of phnA catalyzes only the C4-C9 aldol condensation, which is unprecedented among known PT domains. The transformation of prephenalenone to phenalenones requires an FAD-dependent monooxygenase phnB, which catalyzes the C2 aromatic hydroxylation of prephenalenone and ring opening of the gamma-pyrone ring simultaneously. Subsequent intramolecular deprotonation of C3 phenolic oxygen accelerates phenalenone ring closure to yield the tricyclic phenalenone core with a C2 hydroxylation. The prenyltransferase phnF further catalyzes reverse C-prenylation of phenalenone by direct electrophilic substitution at C6, or possibly via first a forward O-prenylation of a neighboring phenol in phenalenone, followed by a Claisen rearrangement. The hydroalkoxylation enzyme phnH catalyzes the 5-exo-trig cyclization via acid catalysis after the spontaneous deprotonation of 7-OH, which leads to the formation of the dihydrobenzofuran atrovenetin. Atrovenetin is further converted to deoxyherqueinone by the O-methyltransferase phnC which can methylate C2-OH to stabilize the northern portion of the phenalenone core. Finally, the oxidoreductase phnG converts deoxyherqueinone to herqueinone via C6 hydroxylation. This chain is FAD-dependent monooxygenase phnB, found in Penicillium herquei.